Here is a 438-residue protein sequence, read N- to C-terminus: Innexin inx7 (438 aa).

The Cytoplasmic portion of the chain corresponds to 1–23 (MLNTFSSVRQYLKFDLTRVVIDN). The chain crosses the membrane as a helical span at residues 24 to 44 (IVFKLHYRWTFVILLVATLLI). Topologically, residues 45-58 (TSRQYIGEHIQCLS) are extracellular. A helical membrane pass occupies residues 59-79 (DGVVSPVINTFCFFTPTFTVV). Residues 80–112 (RDQNQTAYRPGSEPPGIGAFDPEKDTIKRHAYY) are Cytoplasmic-facing. A helical membrane pass occupies residues 113–133 (QWVPFVLFFQALCFYIPHALW). Topologically, residues 134–283 (KSWEGGRIKA…VMALNIMNEK (150 aa)) are extracellular. A helical membrane pass occupies residues 284–304 (IYIILWFWYAFLLIVTVLGLL). Topologically, residues 305–438 (WRILTLCFYR…STSDMAKLPV (134 aa)) are cytoplasmic. Disordered regions lie at residues 381–402 (NDVN…PELS) and 415–438 (RRNG…KLPV). Low complexity predominate over residues 418-431 (GSPSAGGAQGPSTS).

Belongs to the pannexin family. As to expression, expressed around gut lobes in embryonic stages 15-17.

It is found in the cell membrane. Its subcellular location is the cell junction. The protein localises to the gap junction. Functionally, structural components of the gap junctions. The polypeptide is Innexin inx7 (Inx7) (Drosophila melanogaster (Fruit fly)).